Reading from the N-terminus, the 164-residue chain is Cytochrome c-type biogenesis protein CcmE (164 aa).

Residues 1 to 8 (MNPRRKKR) lie on the Cytoplasmic side of the membrane. The chain crosses the membrane as a helical; Signal-anchor for type II membrane protein span at residues 9–29 (LTLAVALIGGVAAIASLLLYA). At 30 to 164 (LNSNLNLFFT…EDQSKAGGYK (135 aa)) the chain is on the periplasmic side. Residues His-131 and Tyr-135 each coordinate heme. Residues 140 to 164 (VAEAMGQSHEKLDYSEDQSKAGGYK) form a disordered region. The span at 147–158 (SHEKLDYSEDQS) shows a compositional bias: basic and acidic residues.

This sequence belongs to the CcmE/CycJ family.

The protein localises to the cell inner membrane. Its function is as follows. Heme chaperone required for the biogenesis of c-type cytochromes. Transiently binds heme delivered by CcmC and transfers the heme to apo-cytochromes in a process facilitated by CcmF and CcmH. The polypeptide is Cytochrome c-type biogenesis protein CcmE (Shewanella piezotolerans (strain WP3 / JCM 13877)).